Consider the following 241-residue polypeptide: Carboxy-S-adenosyl-L-methionine synthase (241 aa).

S-adenosyl-L-methionine-binding positions include Tyr38, 63–65, 88–89, 116–117, Asn131, and Arg198; these read GCS, DN, and DI.

Belongs to the class I-like SAM-binding methyltransferase superfamily. Cx-SAM synthase family. In terms of assembly, homodimer.

The enzyme catalyses prephenate + S-adenosyl-L-methionine = carboxy-S-adenosyl-L-methionine + 3-phenylpyruvate + H2O. Functionally, catalyzes the conversion of S-adenosyl-L-methionine (SAM) to carboxy-S-adenosyl-L-methionine (Cx-SAM). This Actinobacillus succinogenes (strain ATCC 55618 / DSM 22257 / CCUG 43843 / 130Z) protein is Carboxy-S-adenosyl-L-methionine synthase.